Reading from the N-terminus, the 201-residue chain is MQTSPLLTQLMEALRCLPGVGPKSAQRMAFTLLQRDRSGGMRLAQTLTRAMSEIGHCADCRTFTEQEVCNICSNPRRKENGQICVVESPADIYAIEQTGQFSGRYFVLMGHLSPLDGIGPDDIGLDRLEQRLAEEKITEVILATNPTVEGEATANYIAELCAQYDVEASRIAHGVPVGGELEMVDGTTLSHSLAGRHKIRF.

The segment at 57-72 (CADCRTFTEQEVCNIC) adopts a C4-type zinc-finger fold. The 96-residue stretch at 81-176 (GQICVVESPA…EASRIAHGVP (96 aa)) folds into the Toprim domain.

It belongs to the RecR family.

In terms of biological role, may play a role in DNA repair. It seems to be involved in an RecBC-independent recombinational process of DNA repair. It may act with RecF and RecO. The protein is Recombination protein RecR of Escherichia coli O6:K15:H31 (strain 536 / UPEC).